The primary structure comprises 346 residues: Ribonucleoside-diphosphate reductase subunit beta (346 aa).

Residues Glu89, Glu120, and His123 each coordinate Fe cation. Residue Tyr129 is part of the active site. Fe cation-binding residues include Glu193, Glu227, and His230.

The protein belongs to the ribonucleoside diphosphate reductase small chain family. In terms of assembly, tetramer of two alpha and two beta subunits. The cofactor is Fe cation.

It carries out the reaction a 2'-deoxyribonucleoside 5'-diphosphate + [thioredoxin]-disulfide + H2O = a ribonucleoside 5'-diphosphate + [thioredoxin]-dithiol. In terms of biological role, provides the precursors necessary for DNA synthesis. Catalyzes the biosynthesis of deoxyribonucleotides from the corresponding ribonucleotides. The protein is Ribonucleoside-diphosphate reductase subunit beta (nrdB) of Chlamydia pneumoniae (Chlamydophila pneumoniae).